The following is a 384-amino-acid chain: DNA replication and repair protein RecF (384 aa).

43 to 50 (GENGSGKT) serves as a coordination point for ATP.

This sequence belongs to the RecF family.

Its subcellular location is the cytoplasm. Functionally, the RecF protein is involved in DNA metabolism; it is required for DNA replication and normal SOS inducibility. RecF binds preferentially to single-stranded, linear DNA. It also seems to bind ATP. In Brucella abortus (strain 2308), this protein is DNA replication and repair protein RecF.